The following is a 152-amino-acid chain: UPF0178 protein YaiI (152 aa).

It belongs to the UPF0178 family.

This is UPF0178 protein YaiI from Escherichia coli O17:K52:H18 (strain UMN026 / ExPEC).